We begin with the raw amino-acid sequence, 252 residues long: Imidazole glycerol phosphate synthase subunit HisF (252 aa).

Active-site residues include D11 and D130.

Belongs to the HisA/HisF family. Heterodimer of HisH and HisF.

It is found in the cytoplasm. It carries out the reaction 5-[(5-phospho-1-deoxy-D-ribulos-1-ylimino)methylamino]-1-(5-phospho-beta-D-ribosyl)imidazole-4-carboxamide + L-glutamine = D-erythro-1-(imidazol-4-yl)glycerol 3-phosphate + 5-amino-1-(5-phospho-beta-D-ribosyl)imidazole-4-carboxamide + L-glutamate + H(+). It functions in the pathway amino-acid biosynthesis; L-histidine biosynthesis; L-histidine from 5-phospho-alpha-D-ribose 1-diphosphate: step 5/9. Functionally, IGPS catalyzes the conversion of PRFAR and glutamine to IGP, AICAR and glutamate. The HisF subunit catalyzes the cyclization activity that produces IGP and AICAR from PRFAR using the ammonia provided by the HisH subunit. The protein is Imidazole glycerol phosphate synthase subunit HisF of Staphylococcus aureus (strain Mu3 / ATCC 700698).